The chain runs to 301 residues: Ribosomal RNA small subunit methyltransferase H (301 aa).

Residues 35–37 (GGH), Asp-55, Phe-84, Asp-105, and Gln-112 contribute to the S-adenosyl-L-methionine site.

This sequence belongs to the methyltransferase superfamily. RsmH family.

Its subcellular location is the cytoplasm. It catalyses the reaction cytidine(1402) in 16S rRNA + S-adenosyl-L-methionine = N(4)-methylcytidine(1402) in 16S rRNA + S-adenosyl-L-homocysteine + H(+). Its function is as follows. Specifically methylates the N4 position of cytidine in position 1402 (C1402) of 16S rRNA. This is Ribosomal RNA small subunit methyltransferase H from Chloroflexus aurantiacus (strain ATCC 29366 / DSM 635 / J-10-fl).